Here is a 184-residue protein sequence, read N- to C-terminus: Structural protein V8 (184 aa).

A disordered region spans residues 14–35; it reads IYNKSNTLTNTPSNPTGNTNTL.

Belongs to the sputnik virus V6 family.

The protein resides in the virion. This chain is Structural protein V8, found in Sputnik virophage.